A 938-amino-acid chain; its full sequence is Isoleucine--tRNA ligase (938 aa).

The short motif at 58-68 is the 'HIGH' region element; it reads PYANGSIHIGH. Glu561 contacts L-isoleucyl-5'-AMP. Positions 602 to 606 match the 'KMSKS' region motif; sequence KMSKS. Lys605 contributes to the ATP binding site. Positions 901, 904, 921, and 924 each coordinate Zn(2+).

Belongs to the class-I aminoacyl-tRNA synthetase family. IleS type 1 subfamily. In terms of assembly, monomer. Requires Zn(2+) as cofactor.

Its subcellular location is the cytoplasm. The catalysed reaction is tRNA(Ile) + L-isoleucine + ATP = L-isoleucyl-tRNA(Ile) + AMP + diphosphate. Functionally, catalyzes the attachment of isoleucine to tRNA(Ile). As IleRS can inadvertently accommodate and process structurally similar amino acids such as valine, to avoid such errors it has two additional distinct tRNA(Ile)-dependent editing activities. One activity is designated as 'pretransfer' editing and involves the hydrolysis of activated Val-AMP. The other activity is designated 'posttransfer' editing and involves deacylation of mischarged Val-tRNA(Ile). This Klebsiella pneumoniae (strain 342) protein is Isoleucine--tRNA ligase.